Here is a 387-residue protein sequence, read N- to C-terminus: Phosphoglycerate kinase (387 aa).

Residues 21–23 (DLN), R36, 59–62 (HLGR), R113, and R146 each bind substrate. ATP is bound by residues K197, E314, and 340-343 (GGDT).

Belongs to the phosphoglycerate kinase family. In terms of assembly, monomer.

The protein resides in the cytoplasm. The enzyme catalyses (2R)-3-phosphoglycerate + ATP = (2R)-3-phospho-glyceroyl phosphate + ADP. It participates in carbohydrate degradation; glycolysis; pyruvate from D-glyceraldehyde 3-phosphate: step 2/5. This chain is Phosphoglycerate kinase, found in Pectobacterium carotovorum subsp. carotovorum (strain PC1).